The following is a 66-amino-acid chain: Large ribosomal subunit protein bL33c (66 aa).

The protein belongs to the bacterial ribosomal protein bL33 family.

Its subcellular location is the plastid. The protein localises to the chloroplast. The chain is Large ribosomal subunit protein bL33c from Glycine max (Soybean).